We begin with the raw amino-acid sequence, 511 residues long: Bifunctional purine biosynthesis protein PurH (511 aa).

One can recognise an MGS-like domain in the interval 1–147 (MIQIKRALIS…KNYKHTLVLT (147 aa)).

Belongs to the PurH family.

The catalysed reaction is (6R)-10-formyltetrahydrofolate + 5-amino-1-(5-phospho-beta-D-ribosyl)imidazole-4-carboxamide = 5-formamido-1-(5-phospho-D-ribosyl)imidazole-4-carboxamide + (6S)-5,6,7,8-tetrahydrofolate. It carries out the reaction IMP + H2O = 5-formamido-1-(5-phospho-D-ribosyl)imidazole-4-carboxamide. It participates in purine metabolism; IMP biosynthesis via de novo pathway; 5-formamido-1-(5-phospho-D-ribosyl)imidazole-4-carboxamide from 5-amino-1-(5-phospho-D-ribosyl)imidazole-4-carboxamide (10-formyl THF route): step 1/1. The protein operates within purine metabolism; IMP biosynthesis via de novo pathway; IMP from 5-formamido-1-(5-phospho-D-ribosyl)imidazole-4-carboxamide: step 1/1. The protein is Bifunctional purine biosynthesis protein PurH of Leptospira interrogans serogroup Icterohaemorrhagiae serovar Lai (strain 56601).